Here is a 177-residue protein sequence, read N- to C-terminus: Acireductone dioxygenase (177 aa).

Histidine 99, histidine 101, glutamate 105, and histidine 143 together coordinate Fe(2+). 4 residues coordinate Ni(2+): histidine 99, histidine 101, glutamate 105, and histidine 143.

It belongs to the acireductone dioxygenase (ARD) family. As to quaternary structure, monomer. Requires Fe(2+) as cofactor. It depends on Ni(2+) as a cofactor.

The enzyme catalyses 1,2-dihydroxy-5-(methylsulfanyl)pent-1-en-3-one + O2 = 3-(methylsulfanyl)propanoate + CO + formate + 2 H(+). The catalysed reaction is 1,2-dihydroxy-5-(methylsulfanyl)pent-1-en-3-one + O2 = 4-methylsulfanyl-2-oxobutanoate + formate + 2 H(+). It participates in amino-acid biosynthesis; L-methionine biosynthesis via salvage pathway; L-methionine from S-methyl-5-thio-alpha-D-ribose 1-phosphate: step 5/6. Catalyzes 2 different reactions between oxygen and the acireductone 1,2-dihydroxy-3-keto-5-methylthiopentene (DHK-MTPene) depending upon the metal bound in the active site. Fe-containing acireductone dioxygenase (Fe-ARD) produces formate and 2-keto-4-methylthiobutyrate (KMTB), the alpha-ketoacid precursor of methionine in the methionine recycle pathway. Ni-containing acireductone dioxygenase (Ni-ARD) produces methylthiopropionate, carbon monoxide and formate, and does not lie on the methionine recycle pathway. The chain is Acireductone dioxygenase from Leptospira borgpetersenii serovar Hardjo-bovis (strain L550).